A 143-amino-acid chain; its full sequence is Large ribosomal subunit protein uL13 (143 aa).

Belongs to the universal ribosomal protein uL13 family. Part of the 50S ribosomal subunit.

Functionally, this protein is one of the early assembly proteins of the 50S ribosomal subunit, although it is not seen to bind rRNA by itself. It is important during the early stages of 50S assembly. The sequence is that of Large ribosomal subunit protein uL13 from Desulfitobacterium hafniense (strain DSM 10664 / DCB-2).